Reading from the N-terminus, the 430-residue chain is Enolase (430 aa).

Position 164 (Q164) interacts with (2R)-2-phosphoglycerate. E208 serves as the catalytic Proton donor. The Mg(2+) site is built by D245, E288, and D315. Positions 340, 369, 370, and 391 each coordinate (2R)-2-phosphoglycerate. Catalysis depends on K340, which acts as the Proton acceptor.

Belongs to the enolase family. Mg(2+) is required as a cofactor.

Its subcellular location is the cytoplasm. It localises to the secreted. The protein localises to the cell surface. It carries out the reaction (2R)-2-phosphoglycerate = phosphoenolpyruvate + H2O. It participates in carbohydrate degradation; glycolysis; pyruvate from D-glyceraldehyde 3-phosphate: step 4/5. Catalyzes the reversible conversion of 2-phosphoglycerate (2-PG) into phosphoenolpyruvate (PEP). It is essential for the degradation of carbohydrates via glycolysis. This is Enolase from Thermococcus gammatolerans (strain DSM 15229 / JCM 11827 / EJ3).